A 447-amino-acid chain; its full sequence is Tubulin beta-4 chain (447 aa).

Residues Gln11, Glu69, Ser138, Gly142, Thr143, Gly144, Asn204, and Asn226 each contribute to the GTP site. Glu69 contacts Mg(2+). The segment at 423 to 447 is disordered; the sequence is QQYQDATADEEGEYEDEEQQEADDM. Residues 429 to 447 show a composition bias toward acidic residues; sequence TADEEGEYEDEEQQEADDM.

This sequence belongs to the tubulin family. Dimer of alpha and beta chains. A typical microtubule is a hollow water-filled tube with an outer diameter of 25 nm and an inner diameter of 15 nM. Alpha-beta heterodimers associate head-to-tail to form protofilaments running lengthwise along the microtubule wall with the beta-tubulin subunit facing the microtubule plus end conferring a structural polarity. Microtubules usually have 13 protofilaments but different protofilament numbers can be found in some organisms and specialized cells. Mg(2+) serves as cofactor. In terms of tissue distribution, expressed in roots and leaf sheaths.

It is found in the cytoplasm. The protein localises to the cytoskeleton. Its function is as follows. Tubulin is the major constituent of microtubules, a cylinder consisting of laterally associated linear protofilaments composed of alpha- and beta-tubulin heterodimers. Microtubules grow by the addition of GTP-tubulin dimers to the microtubule end, where a stabilizing cap forms. Below the cap, tubulin dimers are in GDP-bound state, owing to GTPase activity of alpha-tubulin. This is Tubulin beta-4 chain (TUBB4) from Oryza sativa subsp. japonica (Rice).